The primary structure comprises 273 residues: Putative ABC transporter ATP-binding protein DVU_1056 (273 aa).

The ABC transporter domain occupies 10-242; sequence LSLDDIHFTY…IHHGGEVAHE (233 aa). An ATP-binding site is contributed by 44–51; sequence GHNGSGKT. The segment at 234 to 273 is disordered; the sequence is HHGGEVAHEHPSRGCCHQHDGSHHHAGHDDDHPHTSQTTE. Residues 235–267 show a composition bias toward basic and acidic residues; the sequence is HGGEVAHEHPSRGCCHQHDGSHHHAGHDDDHPH.

Belongs to the ABC transporter superfamily.

The protein resides in the cell inner membrane. Probably part of an ABC transporter complex. Responsible for energy coupling to the transport system. The protein is Putative ABC transporter ATP-binding protein DVU_1056 of Nitratidesulfovibrio vulgaris (strain ATCC 29579 / DSM 644 / CCUG 34227 / NCIMB 8303 / VKM B-1760 / Hildenborough) (Desulfovibrio vulgaris).